The primary structure comprises 456 residues: Argininosuccinate lyase (456 aa).

It belongs to the lyase 1 family. Argininosuccinate lyase subfamily.

It localises to the cytoplasm. It catalyses the reaction 2-(N(omega)-L-arginino)succinate = fumarate + L-arginine. It participates in amino-acid biosynthesis; L-arginine biosynthesis; L-arginine from L-ornithine and carbamoyl phosphate: step 3/3. The polypeptide is Argininosuccinate lyase (Carboxydothermus hydrogenoformans (strain ATCC BAA-161 / DSM 6008 / Z-2901)).